Here is a 404-residue protein sequence, read N- to C-terminus: LL-diaminopimelate aminotransferase (404 aa).

2 residues coordinate substrate: tyrosine 15 and glycine 42. Pyridoxal 5'-phosphate-binding positions include tyrosine 72, 108–109 (AK), tyrosine 132, asparagine 188, tyrosine 219, and 247–249 (SFS). Residues lysine 109, tyrosine 132, and asparagine 188 each contribute to the substrate site. Residue lysine 250 is modified to N6-(pyridoxal phosphate)lysine. The pyridoxal 5'-phosphate site is built by arginine 258 and asparagine 288. Substrate contacts are provided by asparagine 288 and arginine 384.

It belongs to the class-I pyridoxal-phosphate-dependent aminotransferase family. LL-diaminopimelate aminotransferase subfamily. As to quaternary structure, homodimer. Requires pyridoxal 5'-phosphate as cofactor.

The enzyme catalyses (2S,6S)-2,6-diaminopimelate + 2-oxoglutarate = (S)-2,3,4,5-tetrahydrodipicolinate + L-glutamate + H2O + H(+). It functions in the pathway amino-acid biosynthesis; L-lysine biosynthesis via DAP pathway; LL-2,6-diaminopimelate from (S)-tetrahydrodipicolinate (aminotransferase route): step 1/1. In terms of biological role, involved in the synthesis of meso-diaminopimelate (m-DAP or DL-DAP), required for both lysine and peptidoglycan biosynthesis. Catalyzes the direct conversion of tetrahydrodipicolinate to LL-diaminopimelate. The protein is LL-diaminopimelate aminotransferase of Lachnoclostridium phytofermentans (strain ATCC 700394 / DSM 18823 / ISDg) (Clostridium phytofermentans).